Here is a 290-residue protein sequence, read N- to C-terminus: Agroclavine dehydrogenase (290 aa).

The protein belongs to the fgaFS/easG family. Monomer.

The enzyme catalyses agroclavine + NADP(+) = didehydroagroclavine + NADPH + H(+). The protein operates within alkaloid biosynthesis; ergot alkaloid biosynthesis. In terms of biological role, agroclavine dehydrogenase; part of the gene cluster that mediates the biosynthesis of fungal ergot alkaloid. DmaW catalyzes the first step of ergot alkaloid biosynthesis by condensing dimethylallyl diphosphate (DMAP) and tryptophan to form 4-dimethylallyl-L-tryptophan. The second step is catalyzed by the methyltransferase easF that methylates 4-dimethylallyl-L-tryptophan in the presence of S-adenosyl-L-methionine, resulting in the formation of 4-dimethylallyl-L-abrine. The catalase easC and the FAD-dependent oxidoreductase easE then transform 4-dimethylallyl-L-abrine to chanoclavine-I which is further oxidized by easD in the presence of NAD(+), resulting in the formation of chanoclavine-I aldehyde. Agroclavine dehydrogenase easG then mediates the conversion of chanoclavine-I aldehyde to agroclavine via a non-enzymatic adduct reaction: the substrate is an iminium intermediate that is formed spontaneously from chanoclavine-I aldehyde in the presence of glutathione. The presence of easA is not required to complete this reaction. Further conversion of agroclavine to paspalic acid is a two-step process involving oxidation of agroclavine to elymoclavine and of elymoclavine to paspalic acid, the second step being performed by the elymoclavine oxidase cloA. Paspalic acid is then further converted to D-lysergic acid. Ergopeptines are assembled from D-lysergic acid and three different amino acids by the D-lysergyl-peptide-synthetases composed each of a monomudular and a trimodular nonribosomal peptide synthetase subunit. LpsB and lpsC encode the monomodular subunits responsible for D-lysergic acid activation and incorporation into the ergopeptine backbone. LpsA1 and A2 subunits encode the trimodular nonribosomal peptide synthetase assembling the tripeptide portion of ergopeptines. LpsA1 is responsible for formation of the major ergopeptine, ergotamine, and lpsA2 for alpha-ergocryptine, the minor ergopeptine of the total alkaloid mixture elaborated by C.purpurea. D-lysergyl-tripeptides are assembled by the nonribosomal peptide synthetases and released as N-(D-lysergyl-aminoacyl)-lactams. Cyclolization of the D-lysergyl-tripeptides is performed by the Fe(2+)/2-ketoglutarate-dependent dioxygenase easH which introduces a hydroxyl group into N-(D-lysergyl-aminoacyl)-lactam at alpha-C of the aminoacyl residue followed by spontaneous condensation with the terminal lactam carbonyl group. The sequence is that of Agroclavine dehydrogenase from Claviceps purpurea (Ergot fungus).